A 595-amino-acid polypeptide reads, in one-letter code: Epsin-2 (595 aa).

Residues R8, K11, R25, N30, R63, and H73 each contribute to the a 1,2-diacyl-sn-glycero-3-phospho-(1D-myo-inositol-4,5-bisphosphate) site. The ENTH domain maps to 12 to 144; that stretch reads NIVNNYSEAE…KDEERLKVER (133 aa). A compositionally biased stretch (polar residues) spans 164–183; the sequence is NQITFGRGSSQPNLSTSYSE. Disordered stretches follow at residues 164–254, 267–289, 305–396, and 423–469; these read NQIT…RLRR, SRRD…PGSH, SGPV…KPSS, and TSKK…PESF. R170 is subject to Omega-N-methylarginine. Residues S173, S192, and S195 each carry the phosphoserine modification. Polar residues-rich tracts occupy residues 197–216 and 235–245; these read HGST…PQTS and EQSSESVQTAR. 2 consecutive UIM domains span residues 218–237 and 255–274; these read EEEL…AEQS and GDDL…TVKV. The segment covering 306-337 has biased composition (polar residues); that stretch reads GPVTQKTEPWSAGASANQTNPWGGTVAPSNIT. 4 consecutive repeat copies span residues 313 to 315, 325 to 327, 338 to 340, and 352 to 354. The interval 313-389 is 6 X 3 AA repeats of [DE]-P-W; that stretch reads EPWSAGASAN…SNAGKTTDAW (77 aa). The segment covering 358 to 367 has biased composition (polar residues); the sequence is TTASTQSVPK. The stretch at 370–372 is repeat 5; the sequence is DPW. Polar residues predominate over residues 374-384; that stretch reads ASQQPASNAGK. Copy 6 of the repeat occupies 387–389; sequence DAW. At S443 the chain carries Phosphoserine. Low complexity predominate over residues 449-460; the sequence is SQSLTSASSKPS. Phosphothreonine is present on T465. Repeat copies occupy residues 494–496 and 508–510. The interval 494 to 593 is 3 X 3 AA repeats of N-P-F; sequence NPFLAPGAAA…AQSTGTTNPF (100 aa). At S526 the chain carries Phosphoserine. Repeat 3 spans residues 591 to 593; sequence NPF.

This sequence belongs to the epsin family. As to quaternary structure, binds EPS15, AP-2 and clathrin. Interacts with UBQLN2. Interacts with ITSN1. Ubiquitinated.

The protein resides in the cytoplasm. Its function is as follows. Plays a role in the formation of clathrin-coated invaginations and endocytosis. The chain is Epsin-2 (Epn2) from Mus musculus (Mouse).